Consider the following 434-residue polypeptide: V-type ATP synthase beta chain (434 aa).

This sequence belongs to the ATPase alpha/beta chains family.

Functionally, produces ATP from ADP in the presence of a proton gradient across the membrane. The V-type beta chain is a regulatory subunit. This chain is V-type ATP synthase beta chain (atpB), found in Borreliella burgdorferi (strain ATCC 35210 / DSM 4680 / CIP 102532 / B31) (Borrelia burgdorferi).